The chain runs to 339 residues: DNA-directed RNA polymerase subunit alpha (339 aa).

The tract at residues Met1 to Glu233 is alpha N-terminal domain (alpha-NTD). Positions Lys264–Phe339 are alpha C-terminal domain (alpha-CTD).

Belongs to the RNA polymerase alpha chain family. In plastids the minimal PEP RNA polymerase catalytic core is composed of four subunits: alpha, beta, beta', and beta''. When a (nuclear-encoded) sigma factor is associated with the core the holoenzyme is formed, which can initiate transcription.

It is found in the plastid. It localises to the chloroplast. The catalysed reaction is RNA(n) + a ribonucleoside 5'-triphosphate = RNA(n+1) + diphosphate. Its function is as follows. DNA-dependent RNA polymerase catalyzes the transcription of DNA into RNA using the four ribonucleoside triphosphates as substrates. The sequence is that of DNA-directed RNA polymerase subunit alpha from Psathyrostachys stoloniformis.